We begin with the raw amino-acid sequence, 278 residues long: Orotidine 5'-phosphate decarboxylase (278 aa).

Substrate contacts are provided by residues aspartate 40, 62-64 (KTH), 93-102 (DRKFIDIGNT), tyrosine 229, and arginine 247. Lysine 95 (proton donor) is an active-site residue.

It belongs to the OMP decarboxylase family.

It carries out the reaction orotidine 5'-phosphate + H(+) = UMP + CO2. It participates in pyrimidine metabolism; UMP biosynthesis via de novo pathway; UMP from orotate: step 2/2. The polypeptide is Orotidine 5'-phosphate decarboxylase (pyrG) (Aspergillus fumigatus (strain ATCC MYA-4609 / CBS 101355 / FGSC A1100 / Af293) (Neosartorya fumigata)).